The chain runs to 204 residues: MHLMLVLLGLAALLGTSQSRTGCYGDVNRVDTTGASCKSAKPEKLNYCGVAASRKIAERDLQSMDRYKALIKKVGQKLCVDPAVIAGIISRESHAGKALRNGWGDNGNGFGLMQVDRRSHKPVGEWNGERHLMQGTEILISMIKAIQKKFPRWTKEQQLKGGISAYNAGPGNVRSYERMDIGTTHDDYANDVVARAQYYKQHGY.

The N-terminal stretch at 1–19 is a signal peptide; that stretch reads MHLMLVLLGLAALLGTSQS. Cystine bridges form between Cys23–Cys79 and Cys37–Cys48. Residues Glu92 and Asp105 contribute to the active site.

The protein belongs to the glycosyl hydrolase 23 family.

The protein resides in the secreted. It catalyses the reaction Hydrolysis of (1-&gt;4)-beta-linkages between N-acetylmuramic acid and N-acetyl-D-glucosamine residues in a peptidoglycan and between N-acetyl-D-glucosamine residues in chitodextrins.. Functionally, has bacteriolytic activity against M.luteus. This Struthio camelus (Common ostrich) protein is Lysozyme g.